The primary structure comprises 455 residues: 2-oxoisovalerate dehydrogenase subunit alpha, mitochondrial (455 aa).

A mitochondrion-targeting transit peptide spans 1–55 (MQGSAKMAMAVAVAVARVWRPSRGLGRTGLPLLRLLGARGLARFHPHRWQQQQHF). 2 residues coordinate thiamine diphosphate: Tyr-168 and Arg-169. Ser-216 is a binding site for K(+). A thiamine diphosphate-binding site is contributed by Ser-217. K(+)-binding residues include Pro-218, Thr-221, and Gln-222. Glu-248 serves as a coordination point for Mg(2+). Positions 249, 250, and 275 each coordinate thiamine diphosphate. The Mg(2+) site is built by Asn-277 and Tyr-279. His-346 contributes to the thiamine diphosphate binding site. Residue Ser-347 is modified to Phosphoserine; by BCKDK. Residue Thr-348 is modified to Phosphothreonine. Ser-349 and Ser-357 each carry phosphoserine. Lys-366 carries the N6-acetyllysine; alternate modification. Residue Lys-366 is modified to N6-succinyllysine; alternate. Lys-390 is modified (N6-succinyllysine).

It belongs to the BCKDHA family. Heterotetramer of 2 alpha/BCKDHA and 2 beta chains/BCKDHB that forms the branched-chain alpha-keto acid decarboxylase (E1) component of the BCKD complex. The branched-chain alpha-ketoacid dehydrogenase is a large complex composed of three major building blocks E1, E2 and E3. It is organized around E2, a 24-meric cubic core composed of DBT, to which are associated 6 to 12 copies of E1, and approximately 6 copies of the dehydrogenase E3, a DLD dimer. Interacts with PPM1K. The cofactor is thiamine diphosphate. Requires Mg(2+) as cofactor. In terms of processing, phosphorylated at Ser-347 by BCKDK and dephosphorylated by protein phosphatase PPM1K. As to expression, expressed in kidney (at protein level).

The protein resides in the mitochondrion matrix. It catalyses the reaction N(6)-[(R)-lipoyl]-L-lysyl-[protein] + 3-methyl-2-oxobutanoate + H(+) = N(6)-[(R)-S(8)-2-methylpropanoyldihydrolipoyl]-L-lysyl-[protein] + CO2. Its function is as follows. Together with BCKDHB forms the heterotetrameric E1 subunit of the mitochondrial branched-chain alpha-ketoacid dehydrogenase (BCKD) complex. The BCKD complex catalyzes the multi-step oxidative decarboxylation of alpha-ketoacids derived from the branched-chain amino-acids valine, leucine and isoleucine producing CO2 and acyl-CoA which is subsequently utilized to produce energy. The E1 subunit catalyzes the first step with the decarboxylation of the alpha-ketoacid forming an enzyme-product intermediate. A reductive acylation mediated by the lipoylamide cofactor of E2 extracts the acyl group from the E1 active site for the next step of the reaction. This chain is 2-oxoisovalerate dehydrogenase subunit alpha, mitochondrial (BCKDHA), found in Bos taurus (Bovine).